The sequence spans 94 residues: Pyrimidine/purine nucleoside phosphorylase (94 aa).

It belongs to the nucleoside phosphorylase PpnP family.

It carries out the reaction a purine D-ribonucleoside + phosphate = a purine nucleobase + alpha-D-ribose 1-phosphate. It catalyses the reaction adenosine + phosphate = alpha-D-ribose 1-phosphate + adenine. The catalysed reaction is cytidine + phosphate = cytosine + alpha-D-ribose 1-phosphate. The enzyme catalyses guanosine + phosphate = alpha-D-ribose 1-phosphate + guanine. It carries out the reaction inosine + phosphate = alpha-D-ribose 1-phosphate + hypoxanthine. It catalyses the reaction thymidine + phosphate = 2-deoxy-alpha-D-ribose 1-phosphate + thymine. The catalysed reaction is uridine + phosphate = alpha-D-ribose 1-phosphate + uracil. The enzyme catalyses xanthosine + phosphate = alpha-D-ribose 1-phosphate + xanthine. Its function is as follows. Catalyzes the phosphorolysis of diverse nucleosides, yielding D-ribose 1-phosphate and the respective free bases. Can use uridine, adenosine, guanosine, cytidine, thymidine, inosine and xanthosine as substrates. Also catalyzes the reverse reactions. In Psychromonas ingrahamii (strain DSM 17664 / CCUG 51855 / 37), this protein is Pyrimidine/purine nucleoside phosphorylase.